The sequence spans 99 residues: Plastocyanin B'/B'' (99 aa).

Residues 1–99 enclose the Plastocyanin-like domain; the sequence is IEVLLGSDDG…AGMVGKVTVN (99 aa). The Cu cation site is built by His-37, Cys-84, His-87, and Met-92.

It belongs to the plastocyanin family. It depends on Cu(2+) as a cofactor.

The protein localises to the plastid. The protein resides in the chloroplast thylakoid membrane. Functionally, participates in electron transfer between P700 and the cytochrome b6-f complex in photosystem I. This is Plastocyanin B'/B'' from Nicotiana tabacum (Common tobacco).